The sequence spans 486 residues: Membrane-bound lytic murein transglycosylase F (486 aa).

An N-terminal signal peptide occupies residues 1-26; sequence MFSPMALRPRCAKWLIVTGLFLMLGA. The interval 27 to 267 is non-LT domain; that stretch reads CVEKPSTLER…RLKDRYYGHV (241 aa). The LT domain stretch occupies residues 268–486; sequence DVLGYVGAYT…TKPPEENPPL (219 aa). Glu-314 is a catalytic residue. The interval 464–486 is disordered; the sequence is VAEGNLHVPGVNKTKPPEENPPL.

The protein in the N-terminal section; belongs to the bacterial solute-binding protein 3 family. This sequence in the C-terminal section; belongs to the transglycosylase Slt family.

It localises to the cell outer membrane. It carries out the reaction Exolytic cleavage of the (1-&gt;4)-beta-glycosidic linkage between N-acetylmuramic acid (MurNAc) and N-acetylglucosamine (GlcNAc) residues in peptidoglycan, from either the reducing or the non-reducing ends of the peptidoglycan chains, with concomitant formation of a 1,6-anhydrobond in the MurNAc residue.. In terms of biological role, murein-degrading enzyme that degrades murein glycan strands and insoluble, high-molecular weight murein sacculi, with the concomitant formation of a 1,6-anhydromuramoyl product. Lytic transglycosylases (LTs) play an integral role in the metabolism of the peptidoglycan (PG) sacculus. Their lytic action creates space within the PG sacculus to allow for its expansion as well as for the insertion of various structures such as secretion systems and flagella. The sequence is that of Membrane-bound lytic murein transglycosylase F from Pseudomonas fluorescens (strain ATCC BAA-477 / NRRL B-23932 / Pf-5).